The chain runs to 372 residues: Alpha-L-fucosidase 3 (372 aa).

The N-terminal stretch at 1-23 (MNPILSSLFALSLLSSLSPSTHA) is a signal peptide. The Nucleophile role is filled by Ser-37. N-linked (GlcNAc...) asparagine glycosylation is found at Asn-96, Asn-114, Asn-139, and Asn-182. Catalysis depends on residues Asp-345 and His-348.

The protein belongs to the 'GDSL' lipolytic enzyme family. In terms of tissue distribution, high expression in younger leaves and in the apical region of the inflorescence stem.

The protein resides in the secreted. Its subcellular location is the extracellular space. The protein localises to the apoplast. The catalysed reaction is an alpha-L-fucoside + H2O = L-fucose + an alcohol. Its function is as follows. Hydrolyzes alpha-1,2-linked fucose. Also active on fucosylated xyloglucan oligosaccharides. This is Alpha-L-fucosidase 3 (FXG1) from Arabidopsis thaliana (Mouse-ear cress).